We begin with the raw amino-acid sequence, 480 residues long: MSGDPKIEATAVAKTKEDTNKVDIKAMRQFVEIKGGIENEIYNPENATTYFYREVRRSVPFIKVPEIIKPNGSVNFGGQCQFNIPRCGDYLLNLTLYIEIPKIELNITETAAVPGGAAASLHRVGWVKNLAHQLVKEIKLNIDDTTVVNIDTAFLDMWSEFMTDNGKFDGYKEMIGGSKELWDLDDKVAGAGTIILPLPLFFSRDSGLALPLSSLISSDISVEVLLRKWDEVLLLEDINNSKNKVIKADDIKDGEPKLTSIKLIGTYAVASKYEVNKTRCDDRRMLIEKPFKASEYELPVFDSGKLDEPIPINMEKINGAIKALFFAVKNTSRSNEHSVYKVGLPIPGTLRIDGGSLHALSEIGINLAEHVFVPSLPIEYYSYQQPYEHAKRIPNNRDLFMYSFCLDVGDVDPMGSINPKLLAKRLTFQIKPTKDLAEATKNKQTFKFITYALCNRLVSIRQGKFTLLSQSMYGEDGEDE.

The protein localises to the virion. In terms of biological role, major protein of the capsid. This chain is Major capsid protein (MCP-1), found in Trichoplusia ni ascovirus 2c (TnAV-2c).